We begin with the raw amino-acid sequence, 103 residues long: Large ribosomal subunit protein uL24 (103 aa).

The protein belongs to the universal ribosomal protein uL24 family. As to quaternary structure, part of the 50S ribosomal subunit.

In terms of biological role, one of two assembly initiator proteins, it binds directly to the 5'-end of the 23S rRNA, where it nucleates assembly of the 50S subunit. Functionally, one of the proteins that surrounds the polypeptide exit tunnel on the outside of the subunit. This is Large ribosomal subunit protein uL24 from Halalkalibacterium halodurans (strain ATCC BAA-125 / DSM 18197 / FERM 7344 / JCM 9153 / C-125) (Bacillus halodurans).